The sequence spans 104 residues: Large ribosomal subunit protein uL24 (104 aa).

Basic and acidic residues predominate over residues 85-96 (IKRELGAKEKAR). The interval 85–104 (IKRELGAKEKARADRRKTAK) is disordered.

It belongs to the universal ribosomal protein uL24 family. Part of the 50S ribosomal subunit.

One of two assembly initiator proteins, it binds directly to the 5'-end of the 23S rRNA, where it nucleates assembly of the 50S subunit. Its function is as follows. One of the proteins that surrounds the polypeptide exit tunnel on the outside of the subunit. In Anaeromyxobacter sp. (strain Fw109-5), this protein is Large ribosomal subunit protein uL24.